The primary structure comprises 611 residues: CRS2-associated factor 2, chloroplastic (611 aa).

The N-terminal 58 residues, 1 to 58 (MPPPPPQRPASSHVGRANLFSASPPPLSNRRYPHHRSLPLPPVSPRRRDPKKHSQQPS), are a transit peptide targeting the chloroplast. Residues 1 to 72 (MPPPPPQRPA…TDSGPTRTVT (72 aa)) form a disordered region. The span at 55–72 (QQPSQEEPTDSGPTRTVT) shows a compositional bias: polar residues. 2 consecutive CRM domains span residues 232–328 (EPLT…TRPR) and 350–446 (DGFT…YSKP). The CRS2 binding stretch occupies residues 486-509 (KMFKLWKSAVDSSLALLLDDAEAN). A disordered region spans residues 554-578 (MNDEPETSVAGNEEGQLEQSPDLRD).

In terms of assembly, interacts with CRS2 and RNA. Part of large ribonucleo-protein complexes that include group IIB introns, CRS2 and CAF2.

Its subcellular location is the plastid. It localises to the chloroplast stroma. Functionally, required for the splicing of group IIB introns in chloroplasts. Forms splicing particles with CRS2. Interacts with RNA and confers intron specificity of the splicing particles. This is CRS2-associated factor 2, chloroplastic (CAF2) from Zea mays (Maize).